A 111-amino-acid chain; its full sequence is UPF0060 membrane protein Cbei_2176 (111 aa).

A run of 4 helical transmembrane segments spans residues 7–27, 33–53, 60–80, and 85–105; these read ILYF…IWIW, SYLY…IPTL, FGKV…LWGW, and IVPD…VIVI.

This sequence belongs to the UPF0060 family.

Its subcellular location is the cell membrane. The chain is UPF0060 membrane protein Cbei_2176 from Clostridium beijerinckii (strain ATCC 51743 / NCIMB 8052) (Clostridium acetobutylicum).